The following is a 254-amino-acid chain: MTGTLYVVGTGPGSAKQMTPETAEAVAAAQEFYGYFPYLDRLNLRPDQIRVASDNREELDRAQVALTRAAAGVKVCMVSGGDPGVFAMAAAVCEAIDKGPAEWKSVELVITPGVTAMLAVAARIGAPLGHDFCAISLSDNLKPWEVITRRLRLAAEAGFVIALYNPISKARPWQLGEAFELLRSVLPASVPVIFGRAAGRPDERIAVMPLGEADANRADMATCVIIGSPETRIVERDGQPDLVYTPRFYAGASQ.

This sequence belongs to the precorrin methyltransferase family.

The catalysed reaction is precorrin-3B + S-adenosyl-L-methionine = precorrin-4 + S-adenosyl-L-homocysteine + 3 H(+). It participates in cofactor biosynthesis; adenosylcobalamin biosynthesis; cob(II)yrinate a,c-diamide from precorrin-2 (aerobic route): step 3/10. In terms of biological role, methyltransferase that catalyzes the methylation of C-17 in precorrin-3B to form precorrin-4. In Sinorhizobium sp, this protein is Precorrin-3B C(17)-methyltransferase (cobJ).